Consider the following 430-residue polypeptide: tRNA(Ile)-lysidine synthase (430 aa).

Position 27-32 (27-32 (SGGSDS)) interacts with ATP.

This sequence belongs to the tRNA(Ile)-lysidine synthase family.

Its subcellular location is the cytoplasm. The catalysed reaction is cytidine(34) in tRNA(Ile2) + L-lysine + ATP = lysidine(34) in tRNA(Ile2) + AMP + diphosphate + H(+). Functionally, ligates lysine onto the cytidine present at position 34 of the AUA codon-specific tRNA(Ile) that contains the anticodon CAU, in an ATP-dependent manner. Cytidine is converted to lysidine, thus changing the amino acid specificity of the tRNA from methionine to isoleucine. The chain is tRNA(Ile)-lysidine synthase from Rickettsia felis (strain ATCC VR-1525 / URRWXCal2) (Rickettsia azadi).